The following is a 161-amino-acid chain: Shikimate kinase (161 aa).

Residue 10–15 (GAGKTT) coordinates ATP. Residue Thr14 coordinates Mg(2+). 3 residues coordinate substrate: Asp28, Arg52, and Gly74. Arg114 lines the ATP pocket. Residue Arg132 coordinates substrate.

It belongs to the shikimate kinase family. In terms of assembly, monomer. The cofactor is Mg(2+).

It is found in the cytoplasm. The catalysed reaction is shikimate + ATP = 3-phosphoshikimate + ADP + H(+). It participates in metabolic intermediate biosynthesis; chorismate biosynthesis; chorismate from D-erythrose 4-phosphate and phosphoenolpyruvate: step 5/7. Catalyzes the specific phosphorylation of the 3-hydroxyl group of shikimic acid using ATP as a cosubstrate. This is Shikimate kinase from Streptococcus gordonii (strain Challis / ATCC 35105 / BCRC 15272 / CH1 / DL1 / V288).